Consider the following 391-residue polypeptide: E1B 55 kDa protein (391 aa).

S387 carries the post-translational modification Phosphoserine.

The protein belongs to the adenoviridae E1B 55 kDa protein family. In terms of assembly, interacts with host PML-4 and PML-5; this interaction promotes efficient subnuclear targeting of E1B-55K to PML nuclear bodies. Interacts with E4-ORF3 protein. Interacts with E4-ORF6 protein.

The protein localises to the host nucleus. The protein resides in the host cytoplasm. Plays a major role to prevent cellular inhibition of viral genome replication. Assembles an SCF-like E3 ubiquitin ligase complex based on the cellular proteins ELOB, ELOC, CUL5 and RBX1, in cooperation with viral E4orf6. This viral RING-type ligase ubiquitinates cellular substrates and targets them to proteasomal degradation: TP53/p53, LIG4, MRE11-RAD50-NBS1 (MRN) complex, ITGA3, DAXX and BLM. E1B-55K probably acts as the substrate-specific adapter of the SCF-like E3 ubiquitin ligase complex. Degradation of host TP53/p53 activity is essential for preventing E1A-induced TP53 accumulation that would otherwise lead to cell apoptosis and growth arrest. E1B-55K also inactivates TP53 transcription-factor activity by binding its transactivation domain. E1B-55K also functions as a SUMO1 E3 ligase for TP53 which causes the latter to be sequestered in promyelocytic leukemia (PML) nuclear bodies thereby contributing to maximal inhibition of TP53 function. The sequence is that of E1B 55 kDa protein from Tree shrew adenovirus serotype 1 (TSAdV-1).